The primary structure comprises 1362 residues: Bromodomain-containing protein 4B (1362 aa).

Disordered stretches follow at residues Glu22–Arg57, Ser200–Ala243, Leu274–Thr367, Asp476–Glu639, Cys699–Pro941, and Ser953–Gln1349. The segment covering Gln34–Ile49 has biased composition (pro residues). In terms of domain architecture, Bromo 1 spans Arg57 to Met163. Positions Thr219–Thr234 are enriched in pro residues. The span at Pro326–Val342 shows a compositional bias: basic and acidic residues. The segment covering Pro348–Ala358 has biased composition (pro residues). Residues Ser365 to Met474 enclose the Bromo 2 domain. The span at Ala481–Thr503 shows a compositional bias: pro residues. Residues Thr503–Ser521 are NPS region. The span at Ser504 to Glu516 shows a compositional bias: low complexity. Residues Gln542–Gly597 form a BID region region. Residues Lys553 to Arg568 show a composition bias toward basic residues. Basic and acidic residues predominate over residues Lys569 to Ala585. Pro residues predominate over residues Pro606 to Pro621. The region spanning Glu623–Gln707 is the NET domain. Basic and acidic residues predominate over residues Asp628–Glu639. The segment covering Ser722–Ser737 has biased composition (low complexity). Residues Gln750–Pro766 show a composition bias toward basic residues. 2 stretches are compositionally biased toward pro residues: residues Ile772 to Ser793 and Pro871 to Gln889. Positions His893 to Gln905 are enriched in basic residues. Polar residues predominate over residues Tyr926–Pro941. Composition is skewed to low complexity over residues Ser953–Ser963, Ser977–Gly1006, Gln1014–Gln1028, and His1041–Ile1050. The tract at residues Arg1061 to Phe1361 is C-terminal (CTD) region. Residues Gln1086–Pro1099 are compositionally biased toward pro residues. The span at Pro1186 to Ile1207 shows a compositional bias: basic and acidic residues. Positions Pro1224 to Ser1234 are enriched in polar residues. Residues Glu1236–Glu1293 are compositionally biased toward basic and acidic residues. The segment covering Pro1308 to Pro1319 has biased composition (low complexity). Positions Asp1322–Arg1334 are enriched in basic and acidic residues.

It belongs to the BET family.

The protein localises to the nucleus. It is found in the chromosome. Its function is as follows. Chromatin reader protein that recognizes and binds acetylated histones and plays a key role in transmission of epigenetic memory across cell divisions and transcription regulation. Remains associated with acetylated chromatin throughout the entire cell cycle and provides epigenetic memory for postmitotic G1 gene transcription by preserving acetylated chromatin status and maintaining high-order chromatin structure. During interphase, plays a key role in regulating the transcription of signal-inducible genes by associating with the P-TEFb complex and recruiting it to promoters. The chain is Bromodomain-containing protein 4B (brd4-b) from Xenopus laevis (African clawed frog).